A 367-amino-acid chain; its full sequence is NADH-quinone oxidoreductase subunit D (367 aa).

It belongs to the complex I 49 kDa subunit family. NDH-1 is composed of 14 different subunits. Subunits NuoB, C, D, E, F, and G constitute the peripheral sector of the complex.

It is found in the cell membrane. The catalysed reaction is a quinone + NADH + 5 H(+)(in) = a quinol + NAD(+) + 4 H(+)(out). Functionally, NDH-1 shuttles electrons from NADH, via FMN and iron-sulfur (Fe-S) centers, to quinones in the respiratory chain. The immediate electron acceptor for the enzyme in this species is believed to be ubiquinone. Couples the redox reaction to proton translocation (for every two electrons transferred, four hydrogen ions are translocated across the cytoplasmic membrane), and thus conserves the redox energy in a proton gradient. The protein is NADH-quinone oxidoreductase subunit D of Dehalococcoides mccartyi (strain ATCC BAA-2266 / KCTC 15142 / 195) (Dehalococcoides ethenogenes (strain 195)).